The chain runs to 198 residues: Recombination protein RecR (198 aa).

Residues 57-72 form a C4-type zinc finger; sequence CSICGRLTDDDPCSIC. The 96-residue stretch at 80 to 175 folds into the Toprim domain; that stretch reads TTILVLEDSR…KVTRLARGLA (96 aa).

This sequence belongs to the RecR family.

Functionally, may play a role in DNA repair. It seems to be involved in an RecBC-independent recombinational process of DNA repair. It may act with RecF and RecO. In Streptococcus pneumoniae serotype 2 (strain D39 / NCTC 7466), this protein is Recombination protein RecR.